The primary structure comprises 1324 residues: Structural maintenance of chromosomes protein 4 (1324 aa).

The interval 1–24 (MSDKGIFRTSSTPSIVDVTPDRGE) is disordered. The residue at position 19 (T19) is a Phosphothreonine; by CDC2. 155–162 (GPNGSGKS) contributes to the ATP binding site. 2 coiled-coil regions span residues 310–337 (QELS…AKLE) and 370–628 (NKKT…KASL). The 114-residue stretch at 651-764 (NGFFGRLGDL…KNLEQANRIA (114 aa)) folds into the SMC hinge domain. Coiled-coil stretches lie at residues 825–1077 (YRQH…MSNL) and 1297–1324 (LSSR…ILTD).

It belongs to the SMC family. SMC4 subfamily. As to quaternary structure, forms a heterodimer with cut14/smc2. Component of the condensin complex, which contains the smc2 and smc4 heterodimer, and three non smc subunits that probably regulate the complex: cnd1, cnd2 and cnd3. Interacts with C1739.07. In terms of processing, phosphorylated by CDC2 on Thr-19 at metaphase.

It localises to the nucleus. Its subcellular location is the cytoplasm. It is found in the chromosome. Central component of the condensin complex, a complex required for conversion of interphase chromatin into mitotic-like condense chromosomes. The condensin complex probably introduces positive supercoils into relaxed DNA in the presence of type I topoisomerases and converts nicked DNA into positive knotted forms in the presence of type II topoisomerases. The protein is Structural maintenance of chromosomes protein 4 (cut3) of Schizosaccharomyces pombe (strain 972 / ATCC 24843) (Fission yeast).